Here is a 387-residue protein sequence, read N- to C-terminus: Patatin-08 (387 aa).

Residues 1 to 23 (MATTKSFLILIVMILATTSSTFA) form the signal peptide. Residues 32–230 (LSIDGGGIKG…TVADPALLSI (199 aa)) enclose the PNPLA domain. Residues 36–41 (GGGIKG) carry the GXGXXG motif. Residues 75-79 (GTSTG) carry the GXSXG motif. S77 (nucleophile) is an active-site residue. A glycan (N-linked (GlcNAc...) asparagine) is linked at N115. D216 serves as the catalytic Proton acceptor. Positions 216 to 218 (DGA) match the DGA/G motif. Positions 361–385 (ETYEEALKRFAKLLSDRKKLRANKA) form a coiled coil.

It belongs to the patatin family. Tuber.

It is found in the vacuole. Probable lipolytic acyl hydrolase (LAH), an activity which is thought to be involved in the response of tubers to pathogens. The sequence is that of Patatin-08 from Solanum tuberosum (Potato).